We begin with the raw amino-acid sequence, 133 residues long: Endoribonuclease YbeY (133 aa).

The Zn(2+) site is built by His-105, His-109, and His-115.

This sequence belongs to the endoribonuclease YbeY family. Zn(2+) serves as cofactor.

Its subcellular location is the cytoplasm. Single strand-specific metallo-endoribonuclease involved in late-stage 70S ribosome quality control and in maturation of the 3' terminus of the 16S rRNA. This chain is Endoribonuclease YbeY, found in Lawsonia intracellularis (strain PHE/MN1-00).